The following is a 276-amino-acid chain: DnaJ homolog subfamily C member 27-B (276 aa).

GTP contacts are provided by residues 23–30 (GNAEVGKS), 71–75 (DMAGH), and 137–140 (NKID). The J domain occupies 220–276 (DSWDMLGVKPGATRDEVNKAYRKLAVLLHPDKCVAPGSEDAFKAVVNARTALLKNIK).

It belongs to the small GTPase superfamily. Rab family.

The protein localises to the nucleus. Its function is as follows. GTPase possibly involved in regulation of the MEK/ERK pathway. This Xenopus laevis (African clawed frog) protein is DnaJ homolog subfamily C member 27-B (dnajc27-b).